A 279-amino-acid polypeptide reads, in one-letter code: MGSQQVAISFLTNLAKAAFGLGVAATALNSSLYTVDGGERAVLFDRFRGVLDQTVGEGTHFLIPYLQTPHIYDIRTKPHTFSSKSGTKDLQMVNLTLRVLFRPEVSRLPYIFQTLGLEYDEKVLPSIGNEVLKAVVANFNADQLLTERPQVSALVRDALIKRAREFNIELDDIAITHLSYGAEFSRAVEAKQVAQQEAERSKFVVMKADQERRAAVIRAEGESEAAQLISDATAKAGMGLIELRRIEASREVAATLARSPNVAYLPGGQSMLFNLNPGR.

Position 2 is an N-acetylglycine (Gly2). At Gly2–Val6 the chain is on the mitochondrial matrix side. A helical; Signal-anchor for type II membrane protein transmembrane segment spans residues Ala7 to Leu28. The Mitochondrial intermembrane portion of the chain corresponds to Asn29–Arg279.

The protein belongs to the prohibitin family. In terms of assembly, component of a prohibitin multimeric complex in mitochondrial membranes. As to expression, mostly expressed in proliferative tissues, including vasculature, shoot and root apical tissues. Accumulates in dry seeds.

It localises to the mitochondrion inner membrane. In terms of biological role, prohibitin probably acts as a holdase/unfoldase for the stabilization of newly synthesized mitochondrial proteins. The sequence is that of Prohibitin-4, mitochondrial (PHB4) from Arabidopsis thaliana (Mouse-ear cress).